We begin with the raw amino-acid sequence, 636 residues long: MTRRWSFLVQCFTFKKKEGVRSRYMSDYNYVEVLQKSILFYEAQRSGKLPESNRLNWRGDSGLEDGKDVGHDLTGGWYDAGDHVKFGLPMAYSAAVLAWTVYEYREAYEEAELLDDMLDQIKWATDYFLKAHTGPNEFWAQVGDGNADHGWWGPAEVMPMNRPAFKIDEHCPGTEVAAQTAAALAAGSIIFKETDAPYAAKLLTHAKQLYAFADQYRGEYTDCVTNAQPFYNSWSGYIDELIWGGIWLYLATNDQTYLNKALKAVEEWPKDWDYTFTMSWDNTFFLSQILLARITKEKRFIESTERNLDYWSTGFVQNGKVERITYTPGGLAWLDQWGSLRYTANAAFLAFVYADWVSDQEKKNRYQTFAIRQTHYMLGDNPQNRSYVVGFGKNPPMHPHHRTAHGSWSNQLTTPSSHRHTLYGPLVGGPNRQDQYTDDISDYVSNEVATDYNAAFTGNGAAVWSGQSKLPNFPPKEKVEDEFFVEAAVMSNDTTSTQIKAILYNRSGWPARSSQSLSFRYYVNLSEIFAKGFTDKDIQVTAVYNEGASLSPLTVYDASSHIYFTEIDFTGVAIFPGGESLHKKEIQFRLSAPNGANIWDASNDYSFQGLTSNMQKTARIPVFDQGDLVFGTLPNK.

An N-terminal signal peptide occupies residues 1-25 (MTRRWSFLVQCFTFKKKEGVRSRYM). The Nucleophile role is filled by Asp-82. Active-site residues include His-400, Asp-438, and Glu-447. A CBM3 domain is found at 478–635 (KVEDEFFVEA…GDLVFGTLPN (158 aa)).

Belongs to the glycosyl hydrolase 9 (cellulase E) family.

Its subcellular location is the secreted. It carries out the reaction Endohydrolysis of (1-&gt;4)-beta-D-glucosidic linkages in cellulose, lichenin and cereal beta-D-glucans.. This chain is Endoglucanase 4, found in Bacillus sp. (strain KSM-522).